Reading from the N-terminus, the 433-residue chain is D-amino acid dehydrogenase (433 aa).

FAD is bound at residue 3-17 (VLVLGSGVIGTTSAY).

This sequence belongs to the DadA oxidoreductase family. FAD is required as a cofactor.

The catalysed reaction is a D-alpha-amino acid + A + H2O = a 2-oxocarboxylate + AH2 + NH4(+). It participates in amino-acid degradation; D-alanine degradation; NH(3) and pyruvate from D-alanine: step 1/1. Functionally, oxidative deamination of D-amino acids. The chain is D-amino acid dehydrogenase from Pseudomonas savastanoi pv. phaseolicola (strain 1448A / Race 6) (Pseudomonas syringae pv. phaseolicola (strain 1448A / Race 6)).